The sequence spans 423 residues: Imidazolonepropionase (423 aa).

The Fe(3+) site is built by histidine 80 and histidine 82. Histidine 80 and histidine 82 together coordinate Zn(2+). Residues arginine 89, tyrosine 152, and histidine 185 each coordinate 4-imidazolone-5-propanoate. An N-formimidoyl-L-glutamate-binding site is contributed by tyrosine 152. Histidine 250 provides a ligand contact to Fe(3+). Histidine 250 contributes to the Zn(2+) binding site. Glutamine 253 contacts 4-imidazolone-5-propanoate. Fe(3+) is bound at residue aspartate 325. Residue aspartate 325 participates in Zn(2+) binding. Residues asparagine 327 and glycine 329 each coordinate N-formimidoyl-L-glutamate. Threonine 330 provides a ligand contact to 4-imidazolone-5-propanoate.

This sequence belongs to the metallo-dependent hydrolases superfamily. HutI family. Zn(2+) serves as cofactor. Requires Fe(3+) as cofactor.

Its subcellular location is the cytoplasm. The catalysed reaction is 4-imidazolone-5-propanoate + H2O = N-formimidoyl-L-glutamate. It functions in the pathway amino-acid degradation; L-histidine degradation into L-glutamate; N-formimidoyl-L-glutamate from L-histidine: step 3/3. Catalyzes the hydrolytic cleavage of the carbon-nitrogen bond in imidazolone-5-propanoate to yield N-formimidoyl-L-glutamate. It is the third step in the universal histidine degradation pathway. The sequence is that of Imidazolonepropionase from Cupriavidus pinatubonensis (strain JMP 134 / LMG 1197) (Cupriavidus necator (strain JMP 134)).